The following is a 212-amino-acid chain: Small ribosomal subunit protein eS1 (212 aa).

This sequence belongs to the eukaryotic ribosomal protein eS1 family.

The polypeptide is Small ribosomal subunit protein eS1 (Staphylothermus marinus (strain ATCC 43588 / DSM 3639 / JCM 9404 / F1)).